The sequence spans 88 residues: Large ribosomal subunit protein bL27 (88 aa).

Belongs to the bacterial ribosomal protein bL27 family.

This is Large ribosomal subunit protein bL27 from Mycolicibacterium vanbaalenii (strain DSM 7251 / JCM 13017 / BCRC 16820 / KCTC 9966 / NRRL B-24157 / PYR-1) (Mycobacterium vanbaalenii).